The following is a 116-amino-acid chain: Putative pterin-4-alpha-carbinolamine dehydratase (116 aa).

It belongs to the pterin-4-alpha-carbinolamine dehydratase family.

It catalyses the reaction (4aS,6R)-4a-hydroxy-L-erythro-5,6,7,8-tetrahydrobiopterin = (6R)-L-erythro-6,7-dihydrobiopterin + H2O. The chain is Putative pterin-4-alpha-carbinolamine dehydratase from Xylella fastidiosa (strain M12).